The sequence spans 787 residues: Protein translocase subunit SecA 2 (787 aa).

Residues Gln86, 104–108 (GEGKT), and Asp493 each bind ATP.

It belongs to the SecA family. Monomer and homodimer. Part of the essential Sec protein translocation apparatus which comprises SecA, SecYEG and auxiliary proteins SecDF. Other proteins may also be involved.

The protein localises to the cell membrane. It localises to the cytoplasm. It catalyses the reaction ATP + H2O + cellular proteinSide 1 = ADP + phosphate + cellular proteinSide 2.. In terms of biological role, part of the Sec protein translocase complex. Interacts with the SecYEG preprotein conducting channel. Has a central role in coupling the hydrolysis of ATP to the transfer of proteins into and across the cell membrane, serving as an ATP-driven molecular motor driving the stepwise translocation of polypeptide chains across the membrane. This is Protein translocase subunit SecA 2 from Bacillus thuringiensis subsp. konkukian (strain 97-27).